Here is a 96-residue protein sequence, read N- to C-terminus: ATP-dependent Clp protease adapter protein ClpS (96 aa).

It belongs to the ClpS family. As to quaternary structure, binds to the N-terminal domain of the chaperone ClpA.

Functionally, involved in the modulation of the specificity of the ClpAP-mediated ATP-dependent protein degradation. The chain is ATP-dependent Clp protease adapter protein ClpS from Campylobacter jejuni subsp. doylei (strain ATCC BAA-1458 / RM4099 / 269.97).